The primary structure comprises 434 residues: Solute carrier RCH1 (434 aa).

Residues 1-15 lie on the Cytoplasmic side of the membrane; that stretch reads MKTQYSLIRKIWAHS. The helical transmembrane segment at 16-36 threads the bilayer; sequence VTEFLKSQWFFICLAILIVIA. Residues 37–50 are Extracellular-facing; it reads RFAPNFARDGGLIK. Residues 51–71 traverse the membrane as a helical segment; that stretch reads GQYSIGYGCVAWIFLQSGLGM. The Cytoplasmic segment spans residues 72–87; that stretch reads KSRSLMANMLNWRAHA. A helical transmembrane segment spans residues 88–108; that stretch reads TILVLSFLITSSIVYGFCCAV. Residues 109 to 118 lie on the Extracellular side of the membrane; that stretch reads KAANDPKIDD. A helical membrane pass occupies residues 119–139; it reads WVLIGLILTATCPTTVASNVI. The Cytoplasmic segment spans residues 140 to 149; that stretch reads MTTNAGGNSL. A helical transmembrane segment spans residues 150 to 170; sequence LCVCEVFIGNLLGAFITPALV. Over 171–199 the chain is Extracellular; it reads QMFTNRAPFAYGNPATGNGIGALYGRVMK. The chain crosses the membrane as a helical span at residues 200–220; sequence QVGLSVFVPLFVGQVIQNCFP. At 221–234 the chain is on the cytoplasmic side; that stretch reads KGTAYYLGFLKKYH. Residues 235–255 traverse the membrane as a helical segment; that stretch reads IKIGSYMLLLIMFSSFSTAFY. The Extracellular portion of the chain corresponds to 256–264; it reads QDAFTSVSH. A helical membrane pass occupies residues 265–285; sequence VCIIFLCFFNLGIYIFFTGLS. The Cytoplasmic segment spans residues 286–327; it reads YLCARPWFILKLFPHEPIEGKSTRLYRYSYNIFRPFYYSKED. The chain crosses the membrane as a helical span at residues 328-348; sequence AICIMFCGPAKTAALGVSLIT. The Extracellular segment spans residues 349-362; sequence SQYGDKKEHLGKLL. Residues 363 to 383 traverse the membrane as a helical segment; it reads VPLVLYQVEQVMTANFFVSLF. Residues 384-434 lie on the Cytoplasmic side of the membrane; sequence KRWIQKDAQADGSESSCANENEEVDLEKIISIGTGENQSVLSNNVPYTQPR. Phosphoserine is present on Ser425.

Belongs to the bile acid:sodium symporter (BASS) (TC 2.A.28) family.

It is found in the cell membrane. It localises to the bud neck. Functionally, solute carrier protein that negatively regulates the cytosolic calcium homeostasis in response to high levels of extracellular calcium. This Saccharomyces cerevisiae (strain ATCC 204508 / S288c) (Baker's yeast) protein is Solute carrier RCH1.